Here is a 155-residue protein sequence, read N- to C-terminus: Small ribosomal subunit protein uS7cz/uS7cy (155 aa).

This sequence belongs to the universal ribosomal protein uS7 family. As to quaternary structure, part of the 30S ribosomal subunit.

It localises to the plastid. The protein localises to the chloroplast. Its function is as follows. One of the primary rRNA binding proteins, it binds directly to 16S rRNA where it nucleates assembly of the head domain of the 30S subunit. The chain is Small ribosomal subunit protein uS7cz/uS7cy (rps7-A) from Lotus japonicus (Lotus corniculatus var. japonicus).